We begin with the raw amino-acid sequence, 117 residues long: Large ribosomal subunit protein uL22 (117 aa).

Belongs to the universal ribosomal protein uL22 family. As to quaternary structure, part of the 50S ribosomal subunit.

In terms of biological role, this protein binds specifically to 23S rRNA; its binding is stimulated by other ribosomal proteins, e.g. L4, L17, and L20. It is important during the early stages of 50S assembly. It makes multiple contacts with different domains of the 23S rRNA in the assembled 50S subunit and ribosome. The globular domain of the protein is located near the polypeptide exit tunnel on the outside of the subunit, while an extended beta-hairpin is found that lines the wall of the exit tunnel in the center of the 70S ribosome. The chain is Large ribosomal subunit protein uL22 from Leptospira biflexa serovar Patoc (strain Patoc 1 / ATCC 23582 / Paris).